Reading from the N-terminus, the 347-residue chain is Anthranilate phosphoribosyltransferase (347 aa).

Residues glycine 88, 91–92 (GD), threonine 96, 98–101 (NIST), 116–124 (KHGNRSVSS), and serine 128 contribute to the 5-phospho-alpha-D-ribose 1-diphosphate site. Residue glycine 88 participates in anthranilate binding. Residue serine 100 coordinates Mg(2+). Asparagine 119 lines the anthranilate pocket. An anthranilate-binding site is contributed by arginine 174. Mg(2+) is bound by residues aspartate 232 and glutamate 233.

Belongs to the anthranilate phosphoribosyltransferase family. Homodimer. The cofactor is Mg(2+).

The catalysed reaction is N-(5-phospho-beta-D-ribosyl)anthranilate + diphosphate = 5-phospho-alpha-D-ribose 1-diphosphate + anthranilate. It participates in amino-acid biosynthesis; L-tryptophan biosynthesis; L-tryptophan from chorismate: step 2/5. In terms of biological role, catalyzes the transfer of the phosphoribosyl group of 5-phosphorylribose-1-pyrophosphate (PRPP) to anthranilate to yield N-(5'-phosphoribosyl)-anthranilate (PRA). The sequence is that of Anthranilate phosphoribosyltransferase from Shewanella sp. (strain MR-4).